The sequence spans 472 residues: Pentatricopeptide repeat-containing protein At3g18970 (472 aa).

PPR repeat units follow at residues 107–139 (NERT…MVKK), 146–180 (SELI…TSVT), 181–216 (WNAM…GSGV), 219–253 (TDTT…GFTP), 256–286 (DVFI…MKVK), 287–321 (NVFT…GIKP), 322–352 (NEIT…MKTR), and 358–388 (VIEH…MPIK). The type E motif; degenerate stretch occupies residues 393–472 (LLRSLCNACS…IKTRPGYSFV (80 aa)).

Belongs to the PPR family. PCMP-E subfamily.

The sequence is that of Pentatricopeptide repeat-containing protein At3g18970 (PCMP-E93) from Arabidopsis thaliana (Mouse-ear cress).